Here is a 196-residue protein sequence, read N- to C-terminus: UMP-CMP kinase (196 aa).

13 to 18 (GAGKGT) serves as a coordination point for ATP. At Ser33 the chain carries Phosphoserine. The NMP stretch occupies residues 33–63 (SAGELLRDERKNPDSQYGELIEKYIKDGKIV). Arg39 contributes to the a ribonucleoside 5'-phosphate binding site. N6-acetyllysine occurs at positions 43 and 55. Residues 61–63 (KIV) and 93–96 (GFPR) each bind a ribonucleoside 5'-phosphate. Asn100 lines the CMP pocket. Lys106 bears the N6-succinyllysine mark. The interval 133–143 (ERGKSSGRSDD) is LID. Residue Arg134 coordinates ATP. Arg140 and Arg151 together coordinate a ribonucleoside 5'-phosphate. Lys179 is an ATP binding site. The residue at position 180 (Ser180) is a Phosphoserine.

Belongs to the adenylate kinase family. UMP-CMP kinase subfamily. In terms of assembly, monomer. Requires Mg(2+) as cofactor.

It localises to the nucleus. Its subcellular location is the cytoplasm. The enzyme catalyses CMP + ATP = CDP + ADP. The catalysed reaction is dCMP + ATP = dCDP + ADP. It catalyses the reaction UMP + ATP = UDP + ADP. It carries out the reaction a 2'-deoxyribonucleoside 5'-diphosphate + ATP = a 2'-deoxyribonucleoside 5'-triphosphate + ADP. The enzyme catalyses a ribonucleoside 5'-diphosphate + ATP = a ribonucleoside 5'-triphosphate + ADP. Functionally, catalyzes the phosphorylation of pyrimidine nucleoside monophosphates at the expense of ATP. Plays an important role in de novo pyrimidine nucleotide biosynthesis. Has preference for UMP and CMP as phosphate acceptors. Also displays broad nucleoside diphosphate kinase activity. In Bos taurus (Bovine), this protein is UMP-CMP kinase.